The primary structure comprises 83 residues: Large ribosomal subunit protein eL14 (83 aa).

It belongs to the eukaryotic ribosomal protein eL14 family. As to quaternary structure, part of the 50S ribosomal subunit.

This chain is Large ribosomal subunit protein eL14, found in Thermococcus kodakarensis (strain ATCC BAA-918 / JCM 12380 / KOD1) (Pyrococcus kodakaraensis (strain KOD1)).